A 376-amino-acid chain; its full sequence is Mitogen-activated protein kinase ERK-A (376 aa).

A Protein kinase domain is found at 38-326 (YIKLAYIGEG…VEEALAHPYL (289 aa)). Residues 44–52 (IGEGAYGMV) and K67 each bind ATP. Residue D162 is the Proton acceptor of the active site. T198 is modified (phosphothreonine). The TXY signature appears at 198-200 (TEY). Y200 bears the Phosphotyrosine mark.

This sequence belongs to the protein kinase superfamily. CMGC Ser/Thr protein kinase family. MAP kinase subfamily. Requires Mg(2+) as cofactor. Dually phosphorylated on Thr-198 and Tyr-200, which activates the enzyme. Phosphorylated on tyrosine residue(s) in response to insulin. As to expression, in third instar larvae, expressed in eye imaginal disks. In adults, expressed in head and body.

The protein localises to the cytoplasm. The protein resides in the nucleus. It carries out the reaction L-seryl-[protein] + ATP = O-phospho-L-seryl-[protein] + ADP + H(+). The enzyme catalyses L-threonyl-[protein] + ATP = O-phospho-L-threonyl-[protein] + ADP + H(+). With respect to regulation, activated by tyrosine and threonine phosphorylation. Serine/threonine kinase which acts as an essential component of the MAP kinase signal transduction pathway to regulate proliferation, differentiation and effect cell fate decisions in various tissues. Required downstream of phl/Raf in the sev/sevenless, tor/torso, and EGF receptor homolog Egfr signal transduction pathways. Required for embryonic epithelial tissue repair. During larval development, mediates Ptth/tor signaling leading to the production of ecdysone, a hormone required for the initiation of metamorphosis. The protein is Mitogen-activated protein kinase ERK-A of Drosophila melanogaster (Fruit fly).